The sequence spans 463 residues: 23S rRNA (uracil(1939)-C(5))-methyltransferase RlmD (463 aa).

The TRAM domain maps to 8 to 76 (RSKSATVYTF…KRFEEGELIE (69 aa)). 4 residues coordinate [4Fe-4S] cluster: Cys-90, Cys-96, Cys-99, and Cys-178. Residues Gln-288, Phe-317, Asn-322, Glu-341, Asp-368, and Asp-389 each coordinate S-adenosyl-L-methionine. The active-site Nucleophile is the Cys-415.

It belongs to the class I-like SAM-binding methyltransferase superfamily. RNA M5U methyltransferase family. RlmD subfamily.

The catalysed reaction is uridine(1939) in 23S rRNA + S-adenosyl-L-methionine = 5-methyluridine(1939) in 23S rRNA + S-adenosyl-L-homocysteine + H(+). Functionally, catalyzes the formation of 5-methyl-uridine at position 1939 (m5U1939) in 23S rRNA. The chain is 23S rRNA (uracil(1939)-C(5))-methyltransferase RlmD from Acinetobacter baylyi (strain ATCC 33305 / BD413 / ADP1).